Reading from the N-terminus, the 110-residue chain is UPF0060 membrane protein Veis_0342 (110 aa).

4 helical membrane passes run 8 to 28 (VLFT…WLVI), 33 to 53 (PLWL…LLTL), 63 to 83 (AAYG…VDGV), and 90 to 110 (VAGA…PASA).

It belongs to the UPF0060 family.

It localises to the cell inner membrane. In Verminephrobacter eiseniae (strain EF01-2), this protein is UPF0060 membrane protein Veis_0342.